A 188-amino-acid chain; its full sequence is dCTP deaminase (188 aa).

DCTP-binding positions include 111–116 (KSTYAR), 135–137 (TLE), glutamine 156, tyrosine 170, and glutamine 180. Glutamate 137 serves as the catalytic Proton donor/acceptor.

This sequence belongs to the dCTP deaminase family. Homotrimer.

The catalysed reaction is dCTP + H2O + H(+) = dUTP + NH4(+). It participates in pyrimidine metabolism; dUMP biosynthesis; dUMP from dCTP (dUTP route): step 1/2. Functionally, catalyzes the deamination of dCTP to dUTP. This is dCTP deaminase from Polaromonas sp. (strain JS666 / ATCC BAA-500).